The following is a 735-amino-acid chain: Ion-translocating oxidoreductase complex subunit C (735 aa).

4Fe-4S ferredoxin-type domains follow at residues 368 to 397 and 407 to 436; these read MGAP…QQLY and KATA…VQYF. Positions 377, 380, 383, 387, 416, 419, 422, and 426 each coordinate [4Fe-4S] cluster. A disordered region spans residues 534–711; sequence QARAKQAAHP…EPVEPADPRK (178 aa).

It belongs to the 4Fe4S bacterial-type ferredoxin family. RnfC subfamily. In terms of assembly, the complex is composed of six subunits: RsxA, RsxB, RsxC, RsxD, RsxE and RsxG. It depends on [4Fe-4S] cluster as a cofactor.

The protein resides in the cell inner membrane. In terms of biological role, part of a membrane-bound complex that couples electron transfer with translocation of ions across the membrane. Required to maintain the reduced state of SoxR. The protein is Ion-translocating oxidoreductase complex subunit C of Salmonella paratyphi A (strain ATCC 9150 / SARB42).